A 438-amino-acid polypeptide reads, in one-letter code: tRNA modification GTPase MnmE (438 aa).

3 residues coordinate (6S)-5-formyl-5,6,7,8-tetrahydrofolate: arginine 21, glutamate 79, and lysine 118. In terms of domain architecture, TrmE-type G spans 215–362; it reads GFSIVLIGAP…LEARIEQIVR (148 aa). Residue asparagine 225 participates in K(+) binding. GTP-binding positions include 225–230, 244–250, and 269–272; these read NAGKSS, TDIPGTT, and DTAG. Serine 229 contacts Mg(2+). 3 residues coordinate K(+): threonine 244, isoleucine 246, and threonine 249. Mg(2+) is bound at residue threonine 250. Lysine 438 is a (6S)-5-formyl-5,6,7,8-tetrahydrofolate binding site.

It belongs to the TRAFAC class TrmE-Era-EngA-EngB-Septin-like GTPase superfamily. TrmE GTPase family. Homodimer. Heterotetramer of two MnmE and two MnmG subunits. The cofactor is K(+).

The protein localises to the cytoplasm. Exhibits a very high intrinsic GTPase hydrolysis rate. Involved in the addition of a carboxymethylaminomethyl (cmnm) group at the wobble position (U34) of certain tRNAs, forming tRNA-cmnm(5)s(2)U34. The protein is tRNA modification GTPase MnmE of Maricaulis maris (strain MCS10) (Caulobacter maris).